Reading from the N-terminus, the 358-residue chain is Forkhead box protein I1c (358 aa).

The segment covering Met-1–Ser-13 has biased composition (polar residues). 2 disordered regions span residues Met-1–Ala-25 and Asp-191–Ile-255. Positions Arg-106–Lys-200 form a DNA-binding region, fork-head.

The protein resides in the nucleus. Probable transcription factor. The chain is Forkhead box protein I1c from Xenopus tropicalis (Western clawed frog).